We begin with the raw amino-acid sequence, 74 residues long: Omega-filistatoxin-Kh1a (74 aa).

In terms of processing, contains 6 disulfide bonds. Expressed by the venom gland.

The protein resides in the secreted. In terms of biological role, potently blocks vertebrate calcium channels Cav1 and Cav2. Is the most active on Cav2.2/CACNA1B (from HEK) (IC(50)=2.3 nM), followed by Cav2.1/CACNA1A (IC(50)=4.3 nM), Cav2.2/CACNA1B (from oocyte) (IC(50)=14.4 nM), Cav1.2/CACNA1C (IC(50)=26.8 nM), and Cav2.3/CACNA1E (IC(50)=96.4 nM). The protein is Omega-filistatoxin-Kh1a of Kukulcania hibernalis (Southern house spider).